Here is a 542-residue protein sequence, read N- to C-terminus: Glutamyl-tRNA reductase 2, chloroplastic (542 aa).

Substrate is bound by residues 142-145, S202, 207-209, and Q213; these read TCNR and EGQ. C143 functions as the Nucleophile in the catalytic mechanism. NADP(+) is bound at residue 284–289; that stretch reads GAGKMG.

The protein belongs to the glutamyl-tRNA reductase family. As to expression, found in all tissues examined.

Its subcellular location is the plastid. It is found in the chloroplast. It carries out the reaction (S)-4-amino-5-oxopentanoate + tRNA(Glu) + NADP(+) = L-glutamyl-tRNA(Glu) + NADPH + H(+). It participates in porphyrin-containing compound metabolism; protoporphyrin-IX biosynthesis; 5-aminolevulinate from L-glutamyl-tRNA(Glu): step 1/2. Its function is as follows. Catalyzes the NADPH-dependent reduction of glutamyl-tRNA(Glu) to glutamate 1-semialdehyde (GSA). This chain is Glutamyl-tRNA reductase 2, chloroplastic (HEMA2), found in Cucumis sativus (Cucumber).